The sequence spans 459 residues: Asperlicin C monooxygenase (459 aa).

D49, A62, and R121 together coordinate FAD. The active site involves R199. Residues D323 and A336 each contribute to the FAD site.

The protein belongs to the paxM FAD-dependent monooxygenase family. It depends on FAD as a cofactor.

The catalysed reaction is asperlicin C + NADPH + O2 + H(+) = asperlicin E + NADP(+) + H2O. It carries out the reaction asperlicin C + NADH + O2 + H(+) = asperlicin E + NAD(+) + H2O. Catalyzes the conversion of asperlicin A to form asperlicin E, a potent cholecystokinin receptor CCK(A) antagonist. In Petromyces alliaceus (Aspergillus alliaceus), this protein is Asperlicin C monooxygenase.